The chain runs to 182 residues: Dipetalodipin (182 aa).

Residues 1–18 form the signal peptide; the sequence is MKTIIAAIFLGILMHAFA. 3 cysteine pairs are disulfide-bonded: C21–C134, C55–C181, and C87–C103.

It belongs to the calycin superfamily. Triabin family. In terms of tissue distribution, expressed in salivary glands.

Its subcellular location is the secreted. In terms of biological role, inhibits platelet aggregation, vasoconstriction, and angiogenesis through binding to distinct eicosanoids involved in inflammation (acts as a scavenger), and has a role in inhibiting host innate immunity by impairing platelet-assisted formation of neutrophil extracellular traps (NETs). Inhibits platelet aggregation by collagen (IC(50)=30 nM), thromboxane A2 mimetic (TXA2 mimetic), or arachidonic acid (AA) without affecting aggregation induced by ADP, convulxin (GP6 agonist), PMA, and ristocetin (vWF-dependent platelet agglutinator). Binds with high affinity to TXA2, TXB2, prostaglandine H2 mimetic (PGH2 mimetic), PGD2, PGJ2, and PGF2alpha. Also interacts with 15(S)-hydroxyeicosatetraenoic acid (HETE), being the first calycin/lipocalin described to date to bind to a derivative of 15-lipoxygenase. Binding is not observed to other prostaglandins, leukotrienes, HETEs, lipids, and biogenic amines. It prevents contraction of rat uterus stimulated by PGF2alpha and induces relaxation of aorta previously contracted with TXA2 mimetic. In addition, it inhibits angiogenesis mediated by 15(S)-HETE and does not enhance inhibition of collagen-induced platelet aggregation by SQ29548 (TXA2 antagonist) and indomethacin. Also impairs platelet-assisted formation of neutrophil extracellular traps (NETs). NETs are web-like structures of DNA and proteins that play an important role in killing of pathogens. In addition, NETs are implicated in thrombus formation. In vivo, this protein exhibits antithrombotic activity in two distinct mice models that are highly dependent on platelets. It is noteworthy that it inhibits thrombosis without promoting excessive bleeding. The polypeptide is Dipetalodipin (Dipetalogaster maximus (Blood-sucking bug)).